The chain runs to 54 residues: Protein YmjE (54 aa).

The polypeptide is Protein YmjE (Escherichia coli (strain K12)).